Reading from the N-terminus, the 54-residue chain is Light-harvesting protein B-870 beta chain (54 aa).

Residues 1–20 (EVKQESLSGITEGEAKEFHK) lie on the Cytoplasmic side of the membrane. A bacteriochlorophyll-binding residues include His-19 and His-37. A helical transmembrane segment spans residues 21–43 (IFTSSILVFFGVAAFAHLLVWIW). The Periplasmic portion of the chain corresponds to 44–54 (RPWVPGPNGYS).

Belongs to the antenna complex beta subunit family. In terms of assembly, the core complex is formed by different alpha and beta chains, binding bacteriochlorophyll molecules, and arranged most probably in tetrameric structures disposed around the reaction center. The non-pigmented gamma chains may constitute additional components.

It is found in the cell inner membrane. Functionally, antenna complexes are light-harvesting systems, which transfer the excitation energy to the reaction centers. The protein is Light-harvesting protein B-870 beta chain of Rhodospirillum rubrum.